Consider the following 40-residue polypeptide: Beta-glucosidase 1 (40 aa).

It carries out the reaction Hydrolysis of terminal, non-reducing beta-D-glucosyl residues with release of beta-D-glucose.. The sequence is that of Beta-glucosidase 1 from Passalora fulva (Tomato leaf mold).